Consider the following 195-residue polypeptide: SXP/RAL-2-like protein 2 (195 aa).

Positions 162 to 195 are disordered; it reads EKVHGGSHGGLRGGPGGPRDGPRGGPRGGPRGGR. Over residues 167-195 the composition is skewed to gly residues; the sequence is GSHGGLRGGPGGPRDGPRGGPRGGPRGGR.

The protein belongs to the SXP/RAL-2 family.

The sequence is that of SXP/RAL-2-like protein 2 from Caenorhabditis elegans.